A 773-amino-acid polypeptide reads, in one-letter code: Probable C-mannosyltransferase DPY19L2 (773 aa).

The tract at residues methionine 1–glutamate 45 is disordered. At methionine 1 to arginine 122 the chain is on the nuclear side. The helical transmembrane segment at threonine 123–phenylalanine 143 threads the bilayer. Residues glutamate 144–tyrosine 209 lie on the Perinuclear space side of the membrane. A helical membrane pass occupies residues proline 210–isoleucine 230. Over glutamate 231–proline 256 the chain is Nuclear. Residues alanine 257–isoleucine 277 form a helical membrane-spanning segment. The Perinuclear space portion of the chain corresponds to tyrosine 278–proline 311. A helical transmembrane segment spans residues leucine 312–leucine 332. Over arginine 333 to phenylalanine 358 the chain is Nuclear. Residues alanine 359–isoleucine 379 traverse the membrane as a helical segment. The Perinuclear space portion of the chain corresponds to glutamate 380 to lysine 386. A helical membrane pass occupies residues isoleucine 387–methionine 407. The Nuclear portion of the chain corresponds to tyrosine 408–glutamate 437. The chain crosses the membrane as a helical span at residues leucine 438 to leucine 458. Residues threonine 459 to tyrosine 507 are Perinuclear space-facing. Residues isoleucine 508–valine 528 form a helical membrane-spanning segment. Residues arginine 529 to asparagine 548 lie on the Nuclear side of the membrane. A helical membrane pass occupies residues alanine 549–methionine 569. The Perinuclear space portion of the chain corresponds to arginine 570–arginine 590. A helical transmembrane segment spans residues leucine 591 to methionine 611. Over methionine 612–asparagine 773 the chain is Nuclear.

This sequence belongs to the dpy-19 family. Interacts with FAM209. Predominantly expressed in testis. Present in testis but absent from epididymal sperm (at protein level).

Its subcellular location is the nucleus inner membrane. Probable C-mannosyltransferase that mediates C-mannosylation of tryptophan residues on target proteins. Functionally, required during spermatogenesis for sperm head elongation and acrosome formation. Also plays a role in acrosome attachment to the nuclear envelope. This chain is Probable C-mannosyltransferase DPY19L2 (Dpy19l2), found in Mus musculus (Mouse).